The sequence spans 210 residues: Glutathione S-transferase P (210 aa).

The 80-residue stretch at 2–81 (PPYTVVYFPV…HLGRTLGLYG (80 aa)) folds into the GST N-terminal domain. Tyr4 bears the Phosphotyrosine; by EGFR mark. Glutathione contacts are provided by residues Tyr8, Arg14, Trp39, Lys45, and 52–53 (QL). Thr62 bears the Phosphothreonine mark. 65-66 (QS) provides a ligand contact to glutathione. The 122-residue stretch at 83-204 (DQREAALVDM…ASPEHVNLPI (122 aa)) folds into the GST C-terminal domain. Residues Lys103 and Lys116 each carry the N6-succinyllysine modification. The residue at position 128 (Lys128) is an N6-acetyllysine.

This sequence belongs to the GST superfamily. Pi family. In terms of assembly, homodimer. Interacts with CDK5.

The protein localises to the cytoplasm. It is found in the mitochondrion. The protein resides in the nucleus. The enzyme catalyses RX + glutathione = an S-substituted glutathione + a halide anion + H(+). It carries out the reaction prostaglandin J2 + glutathione = prostaglandin J2-S-(R)-glutathione. It catalyses the reaction prostaglandin J2 + glutathione = prostaglandin J2-S-(S)-glutathione. The catalysed reaction is prostaglandin A2 + glutathione = prostaglandin A2-S-(S)-glutathione. The enzyme catalyses 11(S)-hydroxy-14(S),15(S)-epoxy-(5Z,8Z,12E)-eicosatrienoate + glutathione = (11S,15S)-dihydroxy-14(R)-S-glutathionyl-(5Z,8Z,12E)-eicosatrienoate. In terms of biological role, conjugation of reduced glutathione to a wide number of exogenous and endogenous hydrophobic electrophiles. Involved in the formation of glutathione conjugates of both prostaglandin A2 (PGA2) and prostaglandin J2 (PGJ2). Participates in the formation of novel hepoxilin regioisomers. Negatively regulates CDK5 activity via p25/p35 translocation to prevent neurodegeneration. This Macaca mulatta (Rhesus macaque) protein is Glutathione S-transferase P (GSTP1).